The chain runs to 371 residues: GTPase Obg (371 aa).

Residues 1–159 (MKFVDEAYID…KNLKLELKVL (159 aa)) form the Obg domain. In terms of domain architecture, OBG-type G spans 160–334 (ADVGLLGMPN…LIRTIYKHVH (175 aa)). Residues 166-173 (GMPNAGKS), 191-195 (FTTLH), 213-216 (DIPG), 284-287 (NKLD), and 315-317 (SAL) contribute to the GTP site. The Mg(2+) site is built by Ser173 and Thr193.

It belongs to the TRAFAC class OBG-HflX-like GTPase superfamily. OBG GTPase family. As to quaternary structure, monomer. Mg(2+) serves as cofactor.

The protein resides in the cytoplasm. In terms of biological role, an essential GTPase which binds GTP, GDP and possibly (p)ppGpp with moderate affinity, with high nucleotide exchange rates and a fairly low GTP hydrolysis rate. Plays a role in control of the cell cycle, stress response, ribosome biogenesis and in those bacteria that undergo differentiation, in morphogenesis control. The chain is GTPase Obg from Delftia acidovorans (strain DSM 14801 / SPH-1).